The primary structure comprises 208 residues: Ribosome maturation factor RimP (208 aa).

The tract at residues 189–208 (EAPETGATTMARDGSEEETK) is disordered.

This sequence belongs to the RimP family.

The protein localises to the cytoplasm. Required for maturation of 30S ribosomal subunits. In Ruegeria pomeroyi (strain ATCC 700808 / DSM 15171 / DSS-3) (Silicibacter pomeroyi), this protein is Ribosome maturation factor RimP.